The sequence spans 352 residues: Histidine protein kinase SaeS (352 aa).

Helical transmembrane passes span Q9 to Y29 and T41 to I61. One can recognise a Histidine kinase domain in the interval N130–Q349. H133 is subject to Phosphohistidine; by autocatalysis.

In terms of processing, autophosphorylated.

Its subcellular location is the cell membrane. It catalyses the reaction ATP + protein L-histidine = ADP + protein N-phospho-L-histidine.. In terms of biological role, member of the two-component regulatory system SaeR/SaeS. Probably functions as a membrane-associated protein kinase that upon sensing the appropriate signal, autophosphorylates and in turn activates the cytosolic response regulator SaeR. This chain is Histidine protein kinase SaeS (saeS), found in Staphylococcus epidermidis (strain ATCC 35984 / DSM 28319 / BCRC 17069 / CCUG 31568 / BM 3577 / RP62A).